Reading from the N-terminus, the 201-residue chain is MDIKACYQNAKALLEGHFLLSSGFHSNYYLQSAKVLEDPKLAEQLAKELAKQIQEAHLNIECVCSPAIGGILAGYELARALGVRFIFTERVDNTMALRRGFEVKKNEKILVCEDIITTGKSAMECAKVLEEKGAQIVAFGALANRGICKRVHSHLKAQEGACLPSHLPLFALEDFVFDMHKPSSCPLCTTSTAIKPGSRGN.

113-121 serves as a coordination point for 5-phospho-alpha-D-ribose 1-diphosphate; it reads EDIITTGKS. Orotate is bound by residues Thr117 and Arg145.

This sequence belongs to the purine/pyrimidine phosphoribosyltransferase family. PyrE subfamily. In terms of assembly, homodimer. Mg(2+) serves as cofactor.

It carries out the reaction orotidine 5'-phosphate + diphosphate = orotate + 5-phospho-alpha-D-ribose 1-diphosphate. It functions in the pathway pyrimidine metabolism; UMP biosynthesis via de novo pathway; UMP from orotate: step 1/2. Functionally, catalyzes the transfer of a ribosyl phosphate group from 5-phosphoribose 1-diphosphate to orotate, leading to the formation of orotidine monophosphate (OMP). In Helicobacter pylori (strain Shi470), this protein is Orotate phosphoribosyltransferase.